The chain runs to 212 residues: tRNA (guanine-N(7)-)-methyltransferase (212 aa).

S-adenosyl-L-methionine is bound by residues Glu44, Asp69, Asp96, and Asp118. Asp118 is a catalytic residue. Position 122 (Lys122) interacts with substrate. The tract at residues 124–129 (RHEKRR) is interaction with RNA. Substrate-binding positions include Asp154 and 191-194 (TEYE).

It belongs to the class I-like SAM-binding methyltransferase superfamily. TrmB family.

It carries out the reaction guanosine(46) in tRNA + S-adenosyl-L-methionine = N(7)-methylguanosine(46) in tRNA + S-adenosyl-L-homocysteine. It functions in the pathway tRNA modification; N(7)-methylguanine-tRNA biosynthesis. Functionally, catalyzes the formation of N(7)-methylguanine at position 46 (m7G46) in tRNA. The chain is tRNA (guanine-N(7)-)-methyltransferase from Streptococcus gordonii (strain Challis / ATCC 35105 / BCRC 15272 / CH1 / DL1 / V288).